We begin with the raw amino-acid sequence, 248 residues long: 3-deoxy-manno-octulosonate cytidylyltransferase (248 aa).

Belongs to the KdsB family.

It is found in the cytoplasm. It carries out the reaction 3-deoxy-alpha-D-manno-oct-2-ulosonate + CTP = CMP-3-deoxy-beta-D-manno-octulosonate + diphosphate. It participates in nucleotide-sugar biosynthesis; CMP-3-deoxy-D-manno-octulosonate biosynthesis; CMP-3-deoxy-D-manno-octulosonate from 3-deoxy-D-manno-octulosonate and CTP: step 1/1. It functions in the pathway bacterial outer membrane biogenesis; lipopolysaccharide biosynthesis. Activates KDO (a required 8-carbon sugar) for incorporation into bacterial lipopolysaccharide in Gram-negative bacteria. This Salmonella dublin (strain CT_02021853) protein is 3-deoxy-manno-octulosonate cytidylyltransferase.